Here is a 310-residue protein sequence, read N- to C-terminus: Protein LRATD2 (310 aa).

The segment at 1–76 (MGNQVEKLTH…PPPQPQPYDP (76 aa)) is disordered. Positions 54-64 (PDGGGLPDGGD) are enriched in gly residues. Residues 65–74 (GPPPPQPQPY) are compositionally biased toward pro residues. One can recognise an LRAT domain in the interval 122–217 (VEFVSQAQYP…CRYGKREFKI (96 aa)). The tract at residues 274 to 310 (HPAEPEEGDSNVARTTPPPGRPPAPSSEEEDGEAVAH) is disordered. Residues 289-298 (TPPPGRPPAP) show a composition bias toward pro residues. The span at 300–310 (SEEEDGEAVAH) shows a compositional bias: acidic residues.

It belongs to the LRATD family. In terms of tissue distribution, expressed in esophageal squamous cell carcinomas.

The polypeptide is Protein LRATD2 (Homo sapiens (Human)).